Reading from the N-terminus, the 499-residue chain is Probable cytosol aminopeptidase (499 aa).

Mn(2+)-binding residues include K263 and D268. The active site involves K275. Mn(2+)-binding residues include D286, D345, and E347. Residue R349 is part of the active site.

The protein belongs to the peptidase M17 family. The cofactor is Mn(2+).

Its subcellular location is the cytoplasm. The enzyme catalyses Release of an N-terminal amino acid, Xaa-|-Yaa-, in which Xaa is preferably Leu, but may be other amino acids including Pro although not Arg or Lys, and Yaa may be Pro. Amino acid amides and methyl esters are also readily hydrolyzed, but rates on arylamides are exceedingly low.. It catalyses the reaction Release of an N-terminal amino acid, preferentially leucine, but not glutamic or aspartic acids.. Presumably involved in the processing and regular turnover of intracellular proteins. Catalyzes the removal of unsubstituted N-terminal amino acids from various peptides. The chain is Probable cytosol aminopeptidase from Chlamydia trachomatis serovar L2 (strain ATCC VR-902B / DSM 19102 / 434/Bu).